Reading from the N-terminus, the 521-residue chain is Acetylcholine receptor subunit delta (521 aa).

The first 21 residues, 1–21 (MAWIWISLLLPILIYFPGCFS), serve as a signal peptide directing secretion. Over 22-247 (ESEEERLLNH…ITFYLIIERK (226 aa)) the chain is Extracellular. N-linked (GlcNAc...) asparagine glycans are attached at residues Asn53 and Asn164. A disulfide bridge connects residues Cys151 and Cys165. Helical transmembrane passes span 248–272 (PLFY…VFYL), 280–297 (MTLA…LLLI), and 314–335 (YLMF…VLNL). The Cytoplasmic portion of the chain corresponds to 336-475 (HFRTPSTHAI…WYRIARTVDR (140 aa)). Position 394 is a phosphotyrosine; by Tyr-kinases (Tyr394). Residues 476–494 (LCLFLVTPVMIIGTLWIFL) form a helical membrane-spanning segment.

Belongs to the ligand-gated ion channel (TC 1.A.9) family. Acetylcholine receptor (TC 1.A.9.1) subfamily. Pentamer of two alpha chains, and one each of the beta, delta, and gamma (in immature muscle) or epsilon (in mature muscle) chains.

The protein resides in the postsynaptic cell membrane. Its subcellular location is the cell membrane. It carries out the reaction K(+)(in) = K(+)(out). It catalyses the reaction Na(+)(in) = Na(+)(out). After binding acetylcholine, the AChR responds by an extensive change in conformation that affects all subunits and leads to opening of an ion-conducting channel across the plasma membrane. In Xenopus laevis (African clawed frog), this protein is Acetylcholine receptor subunit delta (chrnd).